We begin with the raw amino-acid sequence, 161 residues long: Transcriptional repressor NrdR (161 aa).

Residues 1–11 (MRCPSCSSLDT) show a composition bias toward polar residues. The interval 1–20 (MRCPSCSSLDTQVKDSRPTE) is disordered. A zinc finger spans residues 3–34 (CPSCSSLDTQVKDSRPTEDSAVIRRRRVCMAC). The ATP-cone domain maps to 49–139 (LTVIKRNGRR…VYRNFREAKD (91 aa)).

This sequence belongs to the NrdR family. Requires Zn(2+) as cofactor.

In terms of biological role, negatively regulates transcription of bacterial ribonucleotide reductase nrd genes and operons by binding to NrdR-boxes. This Rhodopseudomonas palustris (strain BisB18) protein is Transcriptional repressor NrdR.